A 346-amino-acid polypeptide reads, in one-letter code: GTPase Obg (346 aa).

The 158-residue stretch at 1–158 (MKFLDQVKIY…RAIWLRLKLI (158 aa)) folds into the Obg domain. The 169-residue stretch at 159 to 327 (ADVGLVGLPN…LLREAFALVR (169 aa)) folds into the OBG-type G domain. GTP-binding positions include 165–172 (GLPNAGKS), 190–194 (FTTLA), 212–215 (DIPG), 279–282 (NKID), and 308–310 (SGF). Residues Ser172 and Thr192 each contribute to the Mg(2+) site.

The protein belongs to the TRAFAC class OBG-HflX-like GTPase superfamily. OBG GTPase family. As to quaternary structure, monomer. Requires Mg(2+) as cofactor.

It localises to the cytoplasm. An essential GTPase which binds GTP, GDP and possibly (p)ppGpp with moderate affinity, with high nucleotide exchange rates and a fairly low GTP hydrolysis rate. Plays a role in control of the cell cycle, stress response, ribosome biogenesis and in those bacteria that undergo differentiation, in morphogenesis control. This is GTPase Obg from Phenylobacterium zucineum (strain HLK1).